Consider the following 280-residue polypeptide: F420-dependent methylenetetrahydromethanopterin dehydrogenase (280 aa).

It belongs to the MTD family.

The enzyme catalyses 5,10-methylenetetrahydromethanopterin + oxidized coenzyme F420-(gamma-L-Glu)(n) + 2 H(+) = 5,10-methenyl-5,6,7,8-tetrahydromethanopterin + reduced coenzyme F420-(gamma-L-Glu)(n). It participates in one-carbon metabolism; methanogenesis from CO(2); 5,10-methylene-5,6,7,8-tetrahydromethanopterin from 5,10-methenyl-5,6,7,8-tetrahydromethanopterin (coenzyme F420 route): step 1/1. Catalyzes the reversible reduction of methenyl-H(4)MPT(+) to methylene-H(4)MPT. This chain is F420-dependent methylenetetrahydromethanopterin dehydrogenase, found in Methanospirillum hungatei JF-1 (strain ATCC 27890 / DSM 864 / NBRC 100397 / JF-1).